The following is a 366-amino-acid chain: Mitogen-activated protein kinase CPK1 (366 aa).

Residues 17-302 (KLEEIVGEGA…SPSKRITVEE (286 aa)) form the Protein kinase domain. ATP is bound by residues 22 to 30 (VGEGAYGLV) and Lys45. Asp140 acts as the Proton acceptor in catalysis. At Thr181 the chain carries Phosphothreonine. The short motif at 181-183 (TEY) is the TXY element. A Phosphotyrosine modification is found at Tyr183.

It belongs to the protein kinase superfamily. CMGC Ser/Thr protein kinase family. MAP kinase subfamily. It depends on Mg(2+) as a cofactor. Post-translationally, dually phosphorylated on Thr-181 and Tyr-183, which activates the enzyme.

It catalyses the reaction L-seryl-[protein] + ATP = O-phospho-L-seryl-[protein] + ADP + H(+). The enzyme catalyses L-threonyl-[protein] + ATP = O-phospho-L-threonyl-[protein] + ADP + H(+). Activated by tyrosine and threonine phosphorylation. Responds to activation by environmental stress by phosphorylating downstream targets. This Cryptococcus neoformans var. neoformans serotype D (strain B-3501A) (Filobasidiella neoformans) protein is Mitogen-activated protein kinase CPK1 (CPK1).